Consider the following 160-residue polypeptide: Large ribosomal subunit protein uL15 (160 aa).

Residues 1–13 (MKLNELRDNEGAA) are compositionally biased toward basic and acidic residues. The disordered stretch occupies residues 1–51 (MKLNELRDNEGAARKKKRVARGPGSGKGKTAGRGIKGQKSRSGVALNGYEG). The span at 23-35 (PGSGKGKTAGRGI) shows a compositional bias: gly residues.

This sequence belongs to the universal ribosomal protein uL15 family. Part of the 50S ribosomal subunit.

Binds to the 23S rRNA. The chain is Large ribosomal subunit protein uL15 from Cereibacter sphaeroides (strain ATCC 17025 / ATH 2.4.3) (Rhodobacter sphaeroides).